The primary structure comprises 92 residues: Precursor of CEP12 (92 aa).

An N-terminal signal peptide occupies residues 1–30 (MVNRDNSIVALSFFMLFLLVLHLHFETTTA). The propeptide occupies 31 to 70 (ARKPVRVFGPPSSIEWSPPSPPKDDFEWFEINIYKNIEQT). The segment at 70–92 (TAFRPTGQGPSQGIGHKDPPGAP) is disordered. Hydroxyproline is present on residues proline 74 and proline 79. The propeptide occupies 86–92 (KDPPGAP).

Belongs to the C-terminally encoded plant signaling peptide (CEP) family. In terms of assembly, interacts with CEP receptors (e.g. CEPR1 and CEPR2). Post-translationally, the mature small signaling peptide is generated by proteolytic processing of the longer precursor.

The protein resides in the secreted. Its subcellular location is the extracellular space. The protein localises to the apoplast. In terms of biological role, extracellular signaling peptide that may regulate primary root growth rate and systemic nitrogen (N)-demand signaling. This Arabidopsis thaliana (Mouse-ear cress) protein is Precursor of CEP12.